A 96-amino-acid polypeptide reads, in one-letter code: Small, acid-soluble spore protein gamma-type (96 aa).

Positions 1–15 are enriched in polar residues; that stretch reads MNTKNFTPQESRTNA. Positions 1-96 are disordered; sequence MNTKNFTPQE…SEAKKRNNQQ (96 aa). Residues 16 to 27 show a composition bias toward low complexity; the sequence is QQVRQQNQQSAQ. The span at 28 to 41 shows a compositional bias: polar residues; the sequence is GTSSGFATEFASET. 2 repeats span residues 28 to 52 and 61 to 87; these read GTSSGFATEFASETNAQQVRQQNQQ and GATAGGFNTEFASETNVQQVRQQNQQS. Composition is skewed to low complexity over residues 42 to 57 and 76 to 86; these read NAQQVRQQNQQSAQAN and NVQQVRQQNQQ.

The protein belongs to the gamma-type SASP family.

Its function is as follows. SASP are proteins degraded in the first minutes of spore germination and provide amino acids for both new protein synthesis and metabolism. These proteins may be involved in dormant spore's high resistance to UV light. The sequence is that of Small, acid-soluble spore protein gamma-type from Laceyella sacchari (Thermoactinomyces thalpophilus).